Here is a 248-residue protein sequence, read N- to C-terminus: Segregation and condensation protein A (248 aa).

The protein belongs to the ScpA family. In terms of assembly, component of a cohesin-like complex composed of ScpA, ScpB and the Smc homodimer, in which ScpA and ScpB bind to the head domain of Smc. The presence of the three proteins is required for the association of the complex with DNA.

The protein localises to the cytoplasm. In terms of biological role, participates in chromosomal partition during cell division. May act via the formation of a condensin-like complex containing Smc and ScpB that pull DNA away from mid-cell into both cell halves. The chain is Segregation and condensation protein A from Clostridium perfringens (strain SM101 / Type A).